The chain runs to 179 residues: Caveolin-1 (179 aa).

Ser2 is modified (N-acetylserine). Residue Ser2 is modified to Phosphoserine. The required for homooligomerization stretch occupies residues 2–95; it reads SGGKYVDSEG…WKASFTTFTV (94 aa). Over 2–105 the chain is Cytoplasmic; it reads SGGKYVDSEG…TKYWFYRLLS (104 aa). N6-acetyllysine; alternate is present on Lys5. A Glycyl lysine isopeptide (Lys-Gly) (interchain with G-Cter in ubiquitin); alternate cross-link involves residue Lys5. Tyr6 is modified (phosphotyrosine). A Phosphoserine modification is found at Ser9. A Phosphotyrosine; by ABL1 modification is found at Tyr14. Phosphotyrosine is present on Tyr25. Residues Lys26 and Lys30 each participate in a glycyl lysine isopeptide (Lys-Gly) (interchain with G-Cter in ubiquitin) cross-link. Ser37 is modified (phosphoserine). Residues Lys39, Lys48, and Lys58 each participate in a glycyl lysine isopeptide (Lys-Gly) (interchain with G-Cter in ubiquitin) cross-link. The tract at residues 83-95 is interaction with CAVIN3; it reads DGIWKASFTTFTV. Residues 106-126 constitute an intramembrane region (helical); the sequence is ALFGIPMALIWGIYFAILSFL. At 127–179 the chain is on the cytoplasmic side; that stretch reads HIWAVVPCIKSFLIEIQCISRVYSIYVHTFCDPLFEAIGKVFSNIRINMQKEI. The segment at 132 to 143 is interacts with SPRY1, SPRY2, SPRY3 and SPRY4; sequence VPCIKSFLIEIQ. Residues Cys134, Cys144, and Cys157 are each lipidated (S-palmitoyl cysteine). The interval 150–161 is interacts with SPRY1, SPRY2, and SPRY4; the sequence is SIYVHTFCDPLF. The tract at residues 168 to 179 is interacts with SPRY1, SPRY2, SPRY3 and SPRY4; the sequence is FSNIRINMQKEI.

This sequence belongs to the caveolin family. In terms of assembly, homooligomer. Interacts with GLIPR2. Interacts with NOSTRIN. Interacts with SNAP25 and STX1A. Interacts (via the N-terminus) with DPP4; the interaction is direct. Interacts with CTNNB1, CDH1 and JUP. Interacts with PACSIN2; this interaction induces membrane tubulation. Interacts with SLC7A9. Interacts with BMX and BTK. Interacts with TGFBR1. Interacts with CAVIN3 (via leucine-zipper domain) in a cholesterol-sensitive manner. Interacts with CAVIN1. Interacts with EHD2 in a cholesterol-dependent manner. Forms a ternary complex with UBXN6 and VCP; mediates CAV1 targeting to lysosomes for degradation. Interacts with ABCG1; this interaction regulates ABCG1-mediated cholesterol efflux. Interacts with NEU3; this interaction enhances NEU3 sialidase activity within caveola. Interacts (via C-terminus) with SPRY1, SPRY2 (via C-terminus), SPRY3, and SPRY4. Interacts with IGFBP5; this interaction allows trafficking of IGFBP5 from the plasma membrane to the nucleus. Post-translationally, phosphorylated at Tyr-14 by ABL1 in response to oxidative stress. In terms of processing, ubiquitinated. Undergo monoubiquitination and multi- and/or polyubiquitination. Monoubiquitination of N-terminal lysines promotes integration in a ternary complex with UBXN6 and VCP which promotes oligomeric CAV1 targeting to lysosomes for degradation. Ubiquitinated by ZNRF1; leading to degradation and modulation of the TLR4-mediated immune response.

It localises to the golgi apparatus membrane. The protein resides in the cell membrane. It is found in the membrane. Its subcellular location is the caveola. The protein localises to the membrane raft. In terms of biological role, may act as a scaffolding protein within caveolar membranes. Forms a stable heterooligomeric complex with CAV2 that targets to lipid rafts and drives caveolae formation. Mediates the recruitment of CAVIN proteins (CAVIN1/2/3/4) to the caveolae. Interacts directly with G-protein alpha subunits and can functionally regulate their activity. Involved in the costimulatory signal essential for T-cell receptor (TCR)-mediated T-cell activation. Its binding to DPP4 induces T-cell proliferation and NF-kappa-B activation in a T-cell receptor/CD3-dependent manner. Recruits CTNNB1 to caveolar membranes and may regulate CTNNB1-mediated signaling through the Wnt pathway. Negatively regulates TGFB1-mediated activation of SMAD2/3 by mediating the internalization of TGFBR1 from membrane rafts leading to its subsequent degradation. Binds 20(S)-hydroxycholesterol (20(S)-OHC). This chain is Caveolin-1 (CAV1), found in Eulemur macaco macaco (Black lemur).